Reading from the N-terminus, the 424-residue chain is Glutamate-1-semialdehyde 2,1-aminomutase (424 aa).

Position 263 is an N6-(pyridoxal phosphate)lysine (Lys263).

This sequence belongs to the class-III pyridoxal-phosphate-dependent aminotransferase family. HemL subfamily. Homodimer. It depends on pyridoxal 5'-phosphate as a cofactor.

The protein resides in the cytoplasm. The enzyme catalyses (S)-4-amino-5-oxopentanoate = 5-aminolevulinate. It functions in the pathway porphyrin-containing compound metabolism; protoporphyrin-IX biosynthesis; 5-aminolevulinate from L-glutamyl-tRNA(Glu): step 2/2. The chain is Glutamate-1-semialdehyde 2,1-aminomutase from Campylobacter jejuni subsp. doylei (strain ATCC BAA-1458 / RM4099 / 269.97).